Here is a 413-residue protein sequence, read N- to C-terminus: RNA-binding protein 41 (413 aa).

The span at 223-235 (SVGDSGTAESPSL) shows a compositional bias: polar residues. Residues 223–247 (SVGDSGTAESPSLLQDKGKQAAQGK) form a disordered region. Ser-232 bears the Phosphoserine mark. The RRM domain maps to 309–387 (KVLYLKNLSP…KILVIEFGKN (79 aa)).

In terms of biological role, may bind RNA. The polypeptide is RNA-binding protein 41 (RBM41) (Homo sapiens (Human)).